A 696-amino-acid polypeptide reads, in one-letter code: Elongation factor G (696 aa).

Positions 8 to 282 constitute a tr-type G domain; it reads DRTRNIGIMA…AVIDYLPSPL (275 aa). GTP contacts are provided by residues 17-24, 81-85, and 135-138; these read AHIDAGKT, DTPGH, and NKMD.

It belongs to the TRAFAC class translation factor GTPase superfamily. Classic translation factor GTPase family. EF-G/EF-2 subfamily.

It localises to the cytoplasm. Its function is as follows. Catalyzes the GTP-dependent ribosomal translocation step during translation elongation. During this step, the ribosome changes from the pre-translocational (PRE) to the post-translocational (POST) state as the newly formed A-site-bound peptidyl-tRNA and P-site-bound deacylated tRNA move to the P and E sites, respectively. Catalyzes the coordinated movement of the two tRNA molecules, the mRNA and conformational changes in the ribosome. This is Elongation factor G from Staphylococcus saprophyticus subsp. saprophyticus (strain ATCC 15305 / DSM 20229 / NCIMB 8711 / NCTC 7292 / S-41).